The following is a 295-amino-acid chain: Cyclin-G1 (295 aa).

This sequence belongs to the cyclin family. Cyclin G subfamily. As to expression, high levels in skeletal muscle, ovary, kidney and colon.

The protein resides in the nucleus. Functionally, may play a role in growth regulation. Is associated with G2/M phase arrest in response to DNA damage. May be an intermediate by which p53 mediates its role as an inhibitor of cellular proliferation. The polypeptide is Cyclin-G1 (CCNG1) (Homo sapiens (Human)).